The chain runs to 509 residues: FAD-linked oxidoreductase dpmaF (509 aa).

Positions 1-21 (MTRLSLQLIAGLAGQAWLVNS) are cleaved as a signal peptide. Positions 59–231 (LQYEPIAVAV…AEYGFETFPA (173 aa)) constitute an FAD-binding PCMH-type domain. N-linked (GlcNAc...) asparagine glycans are attached at residues Asn-125, Asn-193, and Asn-281.

Belongs to the oxygen-dependent FAD-linked oxidoreductase family. FAD serves as cofactor.

It functions in the pathway secondary metabolite biosynthesis; terpenoid biosynthesis. Functionally, FAD-linked oxidoreductase; part of the gene cluster that mediates the biosynthesis of the diterpenoid pyrones subglutinols A and B. The first step of the pathway is the synthesis of the alpha-pyrone moiety by the polyketide synthase dpmaA via condensation of one acetyl-CoA starter unit with 3 malonyl-CoA units and 2 methylations. The alpha-pyrone is then combined with geranylgeranyl pyrophosphate (GGPP) formed by the GGPP synthase dpmaD through the action of the prenyltransferase dpmaC to yield a linear alpha-pyrone diterpenoid. Subsequent steps in the diterpenoid pyrone biosynthetic pathway involve the decalin core formation, which is initiated by the epoxidation of the C10-C11 olefin by the FAD-dependent oxidoreductase dpmaE, and is followed by a cyclization cascade catalyzed by the terpene cyclase dpmaB. The dehydrogenase dpmaF is then involved in tetrahydrofuran (THF) ring formation at the C5 unit to complete the formation of subglutinols A and B. This chain is FAD-linked oxidoreductase dpmaF, found in Metarhizium anisopliae (Entomophthora anisopliae).